A 173-amino-acid polypeptide reads, in one-letter code: Streptothricin acetyltransferase A (173 aa).

The N-acetyltransferase domain occupies 21-173; it reads VVFGRMIPAF…EIAIFWYYKF (153 aa).

This sequence belongs to the acetyltransferase family. GNAT subfamily. In terms of assembly, homodimer.

The catalysed reaction is streptothricin D + acetyl-CoA = N(beta)-acetylstreptothricin D + CoA + H(+). The enzyme catalyses streptothricin F + acetyl-CoA = N(beta)-acetylstreptothricin F + CoA + H(+). Involved in resistance to streptothricin, a broad-spectrum antibiotic produced by streptomycetes. Detoxifies streptothricin via acetylation of the beta amino group of the first beta-lysyl moiety of streptothricin. The polypeptide is Streptothricin acetyltransferase A (Bacillus subtilis (strain 168)).